The sequence spans 1229 residues: Phosphorylase b kinase regulatory subunit alpha, liver isoform (1229 aa).

A compositionally biased stretch (acidic residues) spans 625-646 (DSLLEDDEEQEEEEEDKFEDDY). Residues 625-648 (DSLLEDDEEQEEEEEDKFEDDYNN) form a disordered region. A calmodulin-binding region spans residues 825-855 (LEELYIQAGACKEWGLIRYISGILRKRVEVL). The segment at 1024-1050 (EIKQRCSSPSTPSGILSPVGPGPADGQ) is disordered. The span at 1028-1037 (RCSSPSTPSG) shows a compositional bias: polar residues. Residues 1052–1092 (HWVERQGQWLRRRRLDGAINRVPVGFYQKVWKILQKCHGLS) are calmodulin-binding. Residue cysteine 1226 is the site of S-farnesyl cysteine attachment.

The protein belongs to the phosphorylase b kinase regulatory chain family. Polymer of 16 chains, four each of alpha, beta, gamma, and delta. Alpha and beta are regulatory chains, gamma is the catalytic chain, and delta is calmodulin. In terms of processing, although the final Cys may be farnesylated, the terminal tripeptide is probably not removed, and the C-terminus is not methylated.

It is found in the cell membrane. The protein operates within glycan biosynthesis; glycogen metabolism. Its activity is regulated as follows. By phosphorylation of various serine residues and by calcium. Functionally, phosphorylase b kinase catalyzes the phosphorylation of serine in certain substrates, including troponin I. The alpha chain may bind calmodulin. This is Phosphorylase b kinase regulatory subunit alpha, liver isoform (phka2) from Takifugu rubripes (Japanese pufferfish).